The following is a 226-amino-acid chain: ATP synthase subunit a (226 aa).

The next 5 helical transmembrane spans lie at 18–38 (LSLN…SYWL), 74–94 (FISL…PYIF), 100–120 (LTLT…YGWI), 158–180 (LAVR…GNTG), and 197–217 (IALL…FAVL).

The protein belongs to the ATPase A chain family. As to quaternary structure, F-type ATPases have 2 components, CF(1) - the catalytic core - and CF(0) - the membrane proton channel. CF(1) has five subunits: alpha(3), beta(3), gamma(1), delta(1), epsilon(1). CF(0) has three main subunits: a, b and c.

Its subcellular location is the mitochondrion inner membrane. Mitochondrial membrane ATP synthase (F(1)F(0) ATP synthase or Complex V) produces ATP from ADP in the presence of a proton gradient across the membrane which is generated by electron transport complexes of the respiratory chain. F-type ATPases consist of two structural domains, F(1) - containing the extramembraneous catalytic core and F(0) - containing the membrane proton channel, linked together by a central stalk and a peripheral stalk. During catalysis, ATP synthesis in the catalytic domain of F(1) is coupled via a rotary mechanism of the central stalk subunits to proton translocation. Key component of the proton channel; it may play a direct role in the translocation of protons across the membrane. This is ATP synthase subunit a (mt:ATPase6) from Anopheles gambiae (African malaria mosquito).